The sequence spans 67 residues: Large ribosomal subunit protein uL30 (67 aa).

The protein belongs to the universal ribosomal protein uL30 family. Part of the 50S ribosomal subunit.

This is Large ribosomal subunit protein uL30 from Thermotoga petrophila (strain ATCC BAA-488 / DSM 13995 / JCM 10881 / RKU-1).